The sequence spans 258 residues: Alpha-hydroxynitrile lyase (258 aa).

Active-site proton donor/acceptor residues include Ser-81 and His-236.

The protein belongs to the AB hydrolase superfamily. Hydroxynitrile lyase family. Homodimer.

The enzyme catalyses (R)-mandelonitrile = benzaldehyde + hydrogen cyanide. Involved in cyanogenesis, the release of HCN from injured tissues. Displays R-selective hydroxynitrile lyase activity. Also accepts nitromethane (MeNO2) as a donor in a reaction with aromatic aldehydes to yield (R)-beta-nitro alcohols. This Arabidopsis thaliana (Mouse-ear cress) protein is Alpha-hydroxynitrile lyase.